We begin with the raw amino-acid sequence, 86 residues long: UPF0297 protein SERP1181 (86 aa).

Belongs to the UPF0297 family.

This Staphylococcus epidermidis (strain ATCC 35984 / DSM 28319 / BCRC 17069 / CCUG 31568 / BM 3577 / RP62A) protein is UPF0297 protein SERP1181.